The chain runs to 104 residues: Type VII secretion system extracellular protein B (104 aa).

This sequence belongs to the WXG100 family. In terms of assembly, homodimer. When mixed with EsxA does not form heterodimers.

The protein localises to the secreted. Virulence factor that is important for the establishment of infection in the host. EsxB is required for EsxA synthesis as well as secretion. Mediates together with EsxA the release of S.aureus from the host cell. Also inhibits host cytokine production and thus modulates dendritic cell-mediated immunity. The protein is Type VII secretion system extracellular protein B of Staphylococcus aureus (strain Mu50 / ATCC 700699).